The following is a 426-amino-acid chain: MLDRKFILQNAQLVAENSAKRGVSVDVDAICRLEAERMDALKQAEELNRQANEVSKQIKSAKDNDERQELIAKGRSLREQKDAAGAAQDRLEAEILELQTILPNMTHPDVPEGGEHDANEIGRGKTPVPEMDFQPLDHLQLGEKHDLFDFEGGARVAGSGFYFLRNAAVRLDLALQQFAISHLAGKGFTPVSTPDLALTSVLQGTGFNPRGPETQIYSIENTELNLVATAEIPLGGMLSGQILASEELPLRYCGLSHCFRTEAGAAGRASKGLYRVHQFTKVEMFAFTLPDQSTAMHEEMRELECEIFDALEVPYRVIDTATGDLGGPAYRKYDLEAWMPGRGESGDWGEVTSTSNCTDYQARRLNVRSKSNTQKGTDFVHTLNGTAIATGRAMIAILENHQRADGTINVPEILRPWVGCDVLKCE.

Residue 229–231 participates in L-serine binding; the sequence is TAE. ATP-binding positions include 260 to 262 and Val276; that span reads RTE. Glu283 is a binding site for L-serine. 350–353 lines the ATP pocket; it reads EVTS. Position 386 (Thr386) interacts with L-serine.

It belongs to the class-II aminoacyl-tRNA synthetase family. Type-1 seryl-tRNA synthetase subfamily. As to quaternary structure, homodimer. The tRNA molecule binds across the dimer.

It localises to the cytoplasm. The catalysed reaction is tRNA(Ser) + L-serine + ATP = L-seryl-tRNA(Ser) + AMP + diphosphate + H(+). It carries out the reaction tRNA(Sec) + L-serine + ATP = L-seryl-tRNA(Sec) + AMP + diphosphate + H(+). It functions in the pathway aminoacyl-tRNA biosynthesis; selenocysteinyl-tRNA(Sec) biosynthesis; L-seryl-tRNA(Sec) from L-serine and tRNA(Sec): step 1/1. Its function is as follows. Catalyzes the attachment of serine to tRNA(Ser). Is also able to aminoacylate tRNA(Sec) with serine, to form the misacylated tRNA L-seryl-tRNA(Sec), which will be further converted into selenocysteinyl-tRNA(Sec). The protein is Serine--tRNA ligase of Rhodopirellula baltica (strain DSM 10527 / NCIMB 13988 / SH1).